An 888-amino-acid polypeptide reads, in one-letter code: G-protein coupled receptor family C group 6 member A (888 aa).

The signal sequence occupies residues 1–15 (MALLMTCFVIVFAAS). Topologically, residues 16 to 568 (QPCQTPDDLV…KEMEYLDSLA (553 aa)) are extracellular. Residues asparagine 251, asparagine 322, asparagine 532, and asparagine 544 are each glycosylated (N-linked (GlcNAc...) asparagine). The helical transmembrane segment at 569–589 (ILLLALSLLGILFVLAIGIIF) threads the bilayer. At 590 to 604 (TRNLNTPVVKSSGEL) the chain is on the cytoplasmic side. The chain crosses the membrane as a helical span at residues 605–625 (MVRYVILFCHFLNFAGTGFFI). Residues 626 to 641 (REPQSFTCKTRQTLIC) are Extracellular-facing. The helical transmembrane segment at 642-662 (MSFTLCISYILMKSLKILLAF) threads the bilayer. Over 663–676 (SSKLQNFLKCFYKP) the chain is Cytoplasmic. Residues 677–697 (IPIIFTCTGIVVVCTLLIFAA) form a helical membrane-spanning segment. The Extracellular segment spans residues 698–718 (PAVGQNVSLPRVIIFECEEGS). A helical membrane pass occupies residues 719–739 (ILAFGSMLGYAAILAFMCFIC). Residues 740-754 (AFKGRKFPENYNEAK) are Cytoplasmic-facing. Residues 755-775 (FITFGMLIYFIAWITFIPIYT) form a helical membrane-spanning segment. The Extracellular portion of the chain corresponds to 776–779 (FGKY). The chain crosses the membrane as a helical span at residues 780–800 (MLVVEIIIILISNYGICCMFF). Over 801-888 (PKCYVILSKQ…ALPPKRISSI (88 aa)) the chain is Cytoplasmic.

It belongs to the G-protein coupled receptor 3 family. In terms of assembly, homodimer; disulfide-linked.

It is found in the cell membrane. Functionally, receptor activated by multiple ligands, including osteocalcin (BGLAP), basic amino acids, and various cations. Activated by amino acids with a preference for basic amino acids such as L-Lys, L-Arg and L-ornithine but also by small and polar amino acids. The L-alpha amino acids respond is augmented by divalent cations Ca(2+) and Mg(2+). Seems to act through a G(q)/G(11) and G(i)-coupled pathway. Regulates testosterone production by acting as a ligand for uncarboxylated osteocalcin hormone: osteocalcin-binding at the surface of Leydig cells initiates a signaling response that promotes the expression of enzymes required for testosterone synthesis in a CREB-dependent manner. Mediates the non-genomic effects of androgens in multiple tissue. May coordinate nutritional and hormonal anabolic signals through the sensing of extracellular amino acids, osteocalcin, divalent ions and its responsiveness to anabolic steroids. In Bos taurus (Bovine), this protein is G-protein coupled receptor family C group 6 member A (GPRC6A).